The following is an 82-amino-acid chain: Cytochrome b-c1 complex subunit 8 (82 aa).

Over 1 to 39 (MGREFGNLTRMRHVITYSLSPFEQRAFPHYFSKGIPNVL) the chain is Mitochondrial matrix. K33 carries the post-translational modification N6-acetyllysine; alternate. K33 is subject to N6-succinyllysine; alternate. A helical membrane pass occupies residues 40-68 (RRMRACVLRVVPPFVAFYLVYTWGTQEFE). Residues 69–82 (NSKRKNPAAYENDK) lie on the Mitochondrial intermembrane side of the membrane.

It belongs to the UQCRQ/QCR8 family. Component of the ubiquinol-cytochrome c oxidoreductase (cytochrome b-c1 complex, complex III, CIII), a multisubunit enzyme composed of 11 subunits. The complex is composed of 3 respiratory subunits cytochrome b, cytochrome c1 and Rieske protein UQCRFS1, 2 core protein subunits UQCRC1/QCR1 and UQCRC2/QCR2, and 6 low-molecular weight protein subunits UQCRH/QCR6, UQCRB/QCR7, UQCRQ/QCR8, UQCR10/QCR9, UQCR11/QCR10 and subunit 9, the cleavage product of Rieske protein UQCRFS1. The complex exists as an obligatory dimer and forms supercomplexes (SCs) in the inner mitochondrial membrane with NADH-ubiquinone oxidoreductase (complex I, CI) and cytochrome c oxidase (complex IV, CIV), resulting in different assemblies (supercomplex SCI(1)III(2)IV(1) and megacomplex MCI(2)III(2)IV(2)). Interacts with UQCC6.

It localises to the mitochondrion inner membrane. Its function is as follows. Component of the ubiquinol-cytochrome c oxidoreductase, a multisubunit transmembrane complex that is part of the mitochondrial electron transport chain which drives oxidative phosphorylation. The respiratory chain contains 3 multisubunit complexes succinate dehydrogenase (complex II, CII), ubiquinol-cytochrome c oxidoreductase (cytochrome b-c1 complex, complex III, CIII) and cytochrome c oxidase (complex IV, CIV), that cooperate to transfer electrons derived from NADH and succinate to molecular oxygen, creating an electrochemical gradient over the inner membrane that drives transmembrane transport and the ATP synthase. The cytochrome b-c1 complex catalyzes electron transfer from ubiquinol to cytochrome c, linking this redox reaction to translocation of protons across the mitochondrial inner membrane, with protons being carried across the membrane as hydrogens on the quinol. In the process called Q cycle, 2 protons are consumed from the matrix, 4 protons are released into the intermembrane space and 2 electrons are passed to cytochrome c. This Ailuropoda melanoleuca (Giant panda) protein is Cytochrome b-c1 complex subunit 8 (UQCRQ).